Reading from the N-terminus, the 132-residue chain is Regulator of ribonuclease activity B (132 aa).

Belongs to the RraB family. Interacts with the C-terminal region of Rne.

The protein resides in the cytoplasm. In terms of biological role, globally modulates RNA abundance by binding to RNase E (Rne) and regulating its endonucleolytic activity. Can modulate Rne action in a substrate-dependent manner by altering the composition of the degradosome. The polypeptide is Regulator of ribonuclease activity B (Alteromonas mediterranea (strain DSM 17117 / CIP 110805 / LMG 28347 / Deep ecotype)).